Reading from the N-terminus, the 661-residue chain is ATP-dependent RNA helicase vasa (661 aa).

Positions 1–10 (MSDDWDDEPI) are enriched in acidic residues. Positions 1 to 186 (MSDDWDDEPI…RRRRNEDDIN (186 aa)) are disordered. Phosphoserine is present on serine 22. A Phosphothreonine modification is found at threonine 27. Composition is skewed to gly residues over residues 38 to 52 (DGVG…GYQG) and 60 to 83 (RIGG…GGFH). Positions 85–95 (GRREGERDFRG) are enriched in basic and acidic residues. 5 tandem repeats follow at residues 93–99 (FRGGEGG), 100–106 (FRGGQGG), 107–113 (SRGGQGG), 114–120 (SRGGQGG), and 121–127 (FRGGEGG). Residues 93–127 (FRGGEGGFRGGQGGSRGGQGGSRGGQGGFRGGEGG) are 5 X 7 AA tandem repeats of [FS]-R-G-G-[EQ]-G-G. Positions 96-129 (GEGGFRGGQGGSRGGQGGSRGGQGGFRGGEGGFR) are enriched in gly residues. A compositionally biased stretch (basic and acidic residues) spans 131–172 (RLYENEDGDERRGRLDREERGGERRGRLDREERGGERGERGD). A B30.2/SPRY domain-binding motif motif is present at residues 184–188 (DINNN). The required for posterior localization in oocyte stretch occupies residues 184–203 (DINNNNNIVEDVERKREFYI). Positions 245–273 (QHFTSADLRDIIIDNVNKSGYKIPTPIQK) match the Q motif motif. The Helicase ATP-binding domain occupies 276–453 (IPVISSGRDL…GEFLKNYVFV (178 aa)). Position 289–296 (289–296 (AQTGSGKT)) interacts with ATP. A DEAD box motif is present at residues 399–402 (DEAD). One can recognise a Helicase C-terminal domain in the interval 477–624 (KRSKLIEILS…TVPDFLRTCG (148 aa)).

This sequence belongs to the DEAD box helicase family. DDX4/VASA subfamily. Interacts with eIF5B and faf. Interacts with gus (via B30.2/SPRY domain) and Fsn (via B30.2/SPRY domain). Interacts with aub, me31B, eIF-4a and TER94. Interacts with piwi; this interaction is RNA independent. Interacts with Dcr-1 and Fmr1; these interactions occur in the polar granules. Requires Mg(2+) as cofactor. In terms of processing, ubiquitinated during oogenesis. Deubiquitinated by faf, which protects this protein from proteasome-mediated degradation. As to expression, abundantly expressed in the female germline. Gus and faf are required for vas expression in the posterior pole of the oocyte.

It localises to the cytoplasm. The protein resides in the perinuclear region. Its subcellular location is the cytoplasmic ribonucleoprotein granule. It carries out the reaction ATP + H2O = ADP + phosphate + H(+). Functionally, involved in translational control mechanisms operating in early stages of oogenesis. Required maternally in many stages of oogenesis, including cystocyte differentiation, oocyte differentiation, and specification of anterior-posterior polarity in the developing cysts. Essential for the formation and/or structural integrity of perinuclear nuage particles during germ cell formation. Required for gus, Fsn and aub accumulation at the posterior pole of the embryo. Required for the localization of vas to the perinuclear region of nurse cells. May have a role in production of piwi-interacting RNA (piRNA). The sequence is that of ATP-dependent RNA helicase vasa from Drosophila melanogaster (Fruit fly).